Reading from the N-terminus, the 930-residue chain is Isoleucine--tRNA ligase (930 aa).

The 'HIGH' region signature appears at 57–67 (PYANGNIHVGH). Glu-554 contributes to the L-isoleucyl-5'-AMP binding site. The 'KMSKS' region motif lies at 595–599 (KMSKS). Lys-598 is a binding site for ATP. The Zn(2+) site is built by Cys-888, Cys-891, Cys-908, and Cys-911.

The protein belongs to the class-I aminoacyl-tRNA synthetase family. IleS type 1 subfamily. Monomer. Zn(2+) serves as cofactor.

Its subcellular location is the cytoplasm. The catalysed reaction is tRNA(Ile) + L-isoleucine + ATP = L-isoleucyl-tRNA(Ile) + AMP + diphosphate. Functionally, catalyzes the attachment of isoleucine to tRNA(Ile). As IleRS can inadvertently accommodate and process structurally similar amino acids such as valine, to avoid such errors it has two additional distinct tRNA(Ile)-dependent editing activities. One activity is designated as 'pretransfer' editing and involves the hydrolysis of activated Val-AMP. The other activity is designated 'posttransfer' editing and involves deacylation of mischarged Val-tRNA(Ile). The sequence is that of Isoleucine--tRNA ligase from Streptococcus pneumoniae serotype 4 (strain ATCC BAA-334 / TIGR4).